The sequence spans 149 residues: Large ribosomal subunit protein uL11 (149 aa).

This sequence belongs to the universal ribosomal protein uL11 family. Part of the ribosomal stalk of the 50S ribosomal subunit. Interacts with L10 and the large rRNA to form the base of the stalk. L10 forms an elongated spine to which L12 dimers bind in a sequential fashion forming a multimeric L10(L12)X complex. One or more lysine residues are methylated.

In terms of biological role, forms part of the ribosomal stalk which helps the ribosome interact with GTP-bound translation factors. The polypeptide is Large ribosomal subunit protein uL11 (Methylobacterium sp. (strain 4-46)).